Here is a 539-residue protein sequence, read N- to C-terminus: Chaperonin GroEL (539 aa).

ATP contacts are provided by residues 29-32, 86-90, G413, 479-481, and D495; these read TLGP, DGTTT, and DAL.

This sequence belongs to the chaperonin (HSP60) family. Forms a cylinder of 14 subunits composed of two heptameric rings stacked back-to-back. Interacts with the co-chaperonin GroES.

It is found in the cytoplasm. The catalysed reaction is ATP + H2O + a folded polypeptide = ADP + phosphate + an unfolded polypeptide.. Its function is as follows. Together with its co-chaperonin GroES, plays an essential role in assisting protein folding. The GroEL-GroES system forms a nano-cage that allows encapsulation of the non-native substrate proteins and provides a physical environment optimized to promote and accelerate protein folding. The protein is Chaperonin GroEL of Pseudothermotoga lettingae (strain ATCC BAA-301 / DSM 14385 / NBRC 107922 / TMO) (Thermotoga lettingae).